The chain runs to 327 residues: Voltage-dependent calcium channel gamma-4 subunit (327 aa).

Residues 1-9 (MVRCDRGLQ) are Cytoplasmic-facing. The helical transmembrane segment at 10–30 (MLLTTAGAFAAFSLMAIAIGT) threads the bilayer. Over 31-107 (DYWLYSSAHI…EYLLRIVRAS (77 aa)) the chain is Extracellular. N-linked (GlcNAc...) asparagine glycosylation is found at N42 and N45. The chain crosses the membrane as a helical span at residues 108–128 (SVFPILSTILLLLGGLCIGAG). Topologically, residues 129-136 (RIYSRKNN) are cytoplasmic. The helical transmembrane segment at 137–157 (IVLSAGILFVAAGLSNIIGII) threads the bilayer. The Extracellular portion of the chain corresponds to 158 to 186 (VYISSNTGDPSDKRDEDKKNHYNYGWSFY). Residues 187–207 (FGALSFIVAETVGVLAVNIYI) traverse the membrane as a helical segment. The Cytoplasmic segment spans residues 208–327 (EKNKELRFKT…SMLNRRTTPV (120 aa)). Positions 235-261 (SYRYRRRRSRSSSRSTEASPSRDVSPM) are disordered. The span at 246–256 (SSRSTEASPSR) shows a compositional bias: low complexity. S259 carries the phosphoserine modification.

Belongs to the PMP-22/EMP/MP20 family. CACNG subfamily. In terms of assembly, interacts with CACNA1C. Identified in a complex with the L-type calcium channel subunits CACNA1C, CACNA2D1 and either CACNB1 or CACNB2. Acts as an auxiliary subunit for AMPA-selective glutamate receptors (AMPARs). Interacts with GRIA1. Detected in heart left ventricle.

It is found in the cell membrane. In terms of biological role, regulates the activity of L-type calcium channels that contain CACNA1C as pore-forming subunit. Regulates the trafficking and gating properties of AMPA-selective glutamate receptors (AMPARs), including GRIA1 and GRIA4. Promotes their targeting to the cell membrane and synapses and modulates their gating properties by slowing their rates of activation, deactivation and desensitization and by mediating their resensitization. This Homo sapiens (Human) protein is Voltage-dependent calcium channel gamma-4 subunit (CACNG4).